The chain runs to 116 residues: NADH-ubiquinone oxidoreductase chain 3 (116 aa).

Transmembrane regions (helical) follow at residues 3 to 23 (LVTT…TISF), 56 to 76 (FFLI…LLPL), and 84 to 104 (APTL…LGLI).

This sequence belongs to the complex I subunit 3 family.

It is found in the mitochondrion membrane. It carries out the reaction a ubiquinone + NADH + 5 H(+)(in) = a ubiquinol + NAD(+) + 4 H(+)(out). Its function is as follows. Core subunit of the mitochondrial membrane respiratory chain NADH dehydrogenase (Complex I) that is believed to belong to the minimal assembly required for catalysis. Complex I functions in the transfer of electrons from NADH to the respiratory chain. The immediate electron acceptor for the enzyme is believed to be ubiquinone. This is NADH-ubiquinone oxidoreductase chain 3 (MT-ND3) from Oncorhynchus nerka (Sockeye salmon).